The sequence spans 885 residues: DNA mismatch repair protein MutS (885 aa).

ATP is bound at residue 626–633; it reads GPNMGGKS.

This sequence belongs to the DNA mismatch repair MutS family.

This protein is involved in the repair of mismatches in DNA. It is possible that it carries out the mismatch recognition step. This protein has a weak ATPase activity. The chain is DNA mismatch repair protein MutS from Burkholderia orbicola (strain MC0-3).